Here is a 323-residue protein sequence, read N- to C-terminus: tRNA-dihydrouridine synthase B (323 aa).

Residues 16–18 (PMA) and glutamine 70 contribute to the FMN site. The active-site Proton donor is the cysteine 100. FMN is bound by residues lysine 139, 200-202 (NGD), and 224-225 (GR).

Belongs to the Dus family. DusB subfamily. FMN serves as cofactor.

It carries out the reaction a 5,6-dihydrouridine in tRNA + NAD(+) = a uridine in tRNA + NADH + H(+). The enzyme catalyses a 5,6-dihydrouridine in tRNA + NADP(+) = a uridine in tRNA + NADPH + H(+). In terms of biological role, catalyzes the synthesis of 5,6-dihydrouridine (D), a modified base found in the D-loop of most tRNAs, via the reduction of the C5-C6 double bond in target uridines. This is tRNA-dihydrouridine synthase B from Proteus vulgaris.